The chain runs to 368 residues: Histidinol-phosphate aminotransferase (368 aa).

At Lys229 the chain carries N6-(pyridoxal phosphate)lysine.

It belongs to the class-II pyridoxal-phosphate-dependent aminotransferase family. Histidinol-phosphate aminotransferase subfamily. As to quaternary structure, homodimer. The cofactor is pyridoxal 5'-phosphate.

The catalysed reaction is L-histidinol phosphate + 2-oxoglutarate = 3-(imidazol-4-yl)-2-oxopropyl phosphate + L-glutamate. It functions in the pathway amino-acid biosynthesis; L-histidine biosynthesis; L-histidine from 5-phospho-alpha-D-ribose 1-diphosphate: step 7/9. This chain is Histidinol-phosphate aminotransferase, found in Acidovorax ebreus (strain TPSY) (Diaphorobacter sp. (strain TPSY)).